The chain runs to 146 residues: 3-dehydroquinate dehydratase (146 aa).

Tyrosine 23 acts as the Proton acceptor in catalysis. Substrate contacts are provided by asparagine 74, histidine 80, and aspartate 87. Histidine 100 functions as the Proton donor in the catalytic mechanism. Substrate contacts are provided by residues 101-102 (IS) and arginine 111.

It belongs to the type-II 3-dehydroquinase family. Homododecamer.

The catalysed reaction is 3-dehydroquinate = 3-dehydroshikimate + H2O. Its pathway is metabolic intermediate biosynthesis; chorismate biosynthesis; chorismate from D-erythrose 4-phosphate and phosphoenolpyruvate: step 3/7. In terms of biological role, catalyzes a trans-dehydration via an enolate intermediate. This Bacillus cereus (strain AH820) protein is 3-dehydroquinate dehydratase.